The sequence spans 511 residues: MTINSSNIENPPSKINSRFSKLTDYIWPIKRHEVSKFLFITLLMFCILFIQNLIRALKDSIVTTMIGAETISFLKFWGVMPSAFLMTAIYVKLVNRMKAENIFYLIISIFLAFFALFAYVIFPNHEILHLSPVTVQNLTANLLNLKWFILLLSKWSFSLFYIIAELWPNVVFALLFWQFVNNITTVEESKRFYPLFGLLSQTGIYLAGQFLENLSNINDYVTNKFALQSSFHTLSIQIILTIVLILGIIAIKTFWLLNHKVLDKEHMALLKFKAKKKSMTIAESFQMILSSRHIRLIATLLICYGIAINLVEGPWKAAATKIYKTPTEYAAFIGSYLSYTGVFTILFVVLGSNIVRRLGWFTAAVITPLIVFITGILFFAVNNFEGFAGLIIANFILTDPALIAITIGAIQNVLSKSSKYTLFDSTKEMAYVPLDPEIKIKGKAAADVIGTKLGKSGSAFLQSLVFIILPSASYQSISICLMIIFIITCLTWLWATKELNKEYKNSIKFSQ.

12 helical membrane-spanning segments follow: residues 34–54 (VSKF…QNLI), 71–91 (ISFL…AIYV), 102–122 (IFYL…YVIF), 157–177 (FSLF…LLFW), 192–212 (FYPL…QFLE), 231–251 (FHTL…IIAI), 296–316 (LIAT…GPWK), 330–350 (AAFI…FVVL), 361–381 (FTAA…FFAV), 390–410 (LIIA…IGAI), 453–473 (LGKS…PSAS), and 476–496 (SISI…LWAT).

This sequence belongs to the ADP/ATP translocase tlc family.

The protein resides in the cell membrane. In terms of biological role, provides the rickettsial cell with host ATP in exchange for rickettsial ADP. This is an obligate exchange system. This energy acquiring activity is an important component of rickettsial parasitism. The sequence is that of ADP,ATP carrier protein 4 (tlcD) from Rickettsia felis (strain ATCC VR-1525 / URRWXCal2) (Rickettsia azadi).